The primary structure comprises 431 residues: Adenylosuccinate lyase (431 aa).

N(6)-(1,2-dicarboxyethyl)-AMP is bound by residues 4–5, 67–69, and 93–94; these read RY, RHD, and TS. The active-site Proton donor/acceptor is His141. A N(6)-(1,2-dicarboxyethyl)-AMP-binding site is contributed by Gln212. The active-site Proton donor/acceptor is the Ser262. N(6)-(1,2-dicarboxyethyl)-AMP is bound by residues Ser263, 268–270, Asn276, and 307–311; these read KRN and SAERI.

It belongs to the lyase 1 family. Adenylosuccinate lyase subfamily. Homotetramer. Residues from neighboring subunits contribute catalytic and substrate-binding residues to each active site.

The catalysed reaction is N(6)-(1,2-dicarboxyethyl)-AMP = fumarate + AMP. The enzyme catalyses (2S)-2-[5-amino-1-(5-phospho-beta-D-ribosyl)imidazole-4-carboxamido]succinate = 5-amino-1-(5-phospho-beta-D-ribosyl)imidazole-4-carboxamide + fumarate. It functions in the pathway purine metabolism; AMP biosynthesis via de novo pathway; AMP from IMP: step 2/2. It participates in purine metabolism; IMP biosynthesis via de novo pathway; 5-amino-1-(5-phospho-D-ribosyl)imidazole-4-carboxamide from 5-amino-1-(5-phospho-D-ribosyl)imidazole-4-carboxylate: step 2/2. In terms of biological role, catalyzes two reactions in de novo purine nucleotide biosynthesis. Catalyzes the breakdown of 5-aminoimidazole- (N-succinylocarboxamide) ribotide (SAICAR or 2-[5-amino-1-(5-phospho-beta-D-ribosyl)imidazole-4-carboxamido]succinate) to 5-aminoimidazole-4-carboxamide ribotide (AICAR or 5-amino-1-(5-phospho-beta-D-ribosyl)imidazole-4-carboxamide) and fumarate, and of adenylosuccinate (ADS or N(6)-(1,2-dicarboxyethyl)-AMP) to adenosine monophosphate (AMP) and fumarate. Influences the affinity of glutamyl--tRNA ligase for its substrates and increases its thermostability. The sequence is that of Adenylosuccinate lyase (purB) from Bacillus subtilis (strain 168).